We begin with the raw amino-acid sequence, 145 residues long: Large ribosomal subunit protein uL15 (145 aa).

The span at M1 to G11 shows a compositional bias: polar residues. Residues M1–F48 form a disordered region. The span at K14–G26 shows a compositional bias: basic residues.

This sequence belongs to the universal ribosomal protein uL15 family. Part of the 50S ribosomal subunit.

Its function is as follows. Binds to the 23S rRNA. The sequence is that of Large ribosomal subunit protein uL15 from Mycoplasmopsis pulmonis (strain UAB CTIP) (Mycoplasma pulmonis).